The following is a 485-amino-acid chain: Glutamyl-tRNA(Gln) amidotransferase subunit A (485 aa).

Residues K79 and S154 each act as charge relay system in the active site. The active-site Acyl-ester intermediate is the S178.

The protein belongs to the amidase family. GatA subfamily. In terms of assembly, heterotrimer of A, B and C subunits.

The enzyme catalyses L-glutamyl-tRNA(Gln) + L-glutamine + ATP + H2O = L-glutaminyl-tRNA(Gln) + L-glutamate + ADP + phosphate + H(+). Its function is as follows. Allows the formation of correctly charged Gln-tRNA(Gln) through the transamidation of misacylated Glu-tRNA(Gln) in organisms which lack glutaminyl-tRNA synthetase. The reaction takes place in the presence of glutamine and ATP through an activated gamma-phospho-Glu-tRNA(Gln). This chain is Glutamyl-tRNA(Gln) amidotransferase subunit A, found in Staphylococcus aureus (strain USA300 / TCH1516).